The sequence spans 320 residues: Cytochrome f (320 aa).

Residues 1–35 (MQTRNAFSCIKEGITRSISISVMIYIIIRAPFSNA) form the signal peptide. Heme is bound by residues Tyr-36, Cys-56, Cys-59, and His-60. The helical transmembrane segment at 286–306 (VQGLLFFLASIILAQIFLVLK) threads the bilayer.

It belongs to the cytochrome f family. In terms of assembly, the 4 large subunits of the cytochrome b6-f complex are cytochrome b6, subunit IV (17 kDa polypeptide, petD), cytochrome f and the Rieske protein, while the 4 small subunits are PetG, PetL, PetM and PetN. The complex functions as a dimer. It depends on heme as a cofactor.

It is found in the plastid. The protein resides in the chloroplast thylakoid membrane. In terms of biological role, component of the cytochrome b6-f complex, which mediates electron transfer between photosystem II (PSII) and photosystem I (PSI), cyclic electron flow around PSI, and state transitions. In Phaseolus vulgaris (Kidney bean), this protein is Cytochrome f.